A 198-amino-acid chain; its full sequence is Nucleoid occlusion factor SlmA (198 aa).

In terms of domain architecture, HTH tetR-type spans 10–70 (NRREEILQSL…SLIEFIEDSL (61 aa)). The segment at residues 33–52 (TTAKLAASVGVSEAALYRHF) is a DNA-binding region (H-T-H motif). A coiled-coil region spans residues 119–144 (DRLQGRINQLFERIEVQLRQVMREKK).

This sequence belongs to the nucleoid occlusion factor SlmA family. Homodimer. Interacts with FtsZ.

The protein localises to the cytoplasm. It is found in the nucleoid. Its function is as follows. Required for nucleoid occlusion (NO) phenomenon, which prevents Z-ring formation and cell division over the nucleoid. Acts as a DNA-associated cell division inhibitor that binds simultaneously chromosomal DNA and FtsZ, and disrupts the assembly of FtsZ polymers. SlmA-DNA-binding sequences (SBS) are dispersed on non-Ter regions of the chromosome, preventing FtsZ polymerization at these regions. The polypeptide is Nucleoid occlusion factor SlmA (Klebsiella pneumoniae (strain 342)).